A 236-amino-acid chain; its full sequence is Growth-regulating factor 12 (236 aa).

The interval 1-27 (MLAEGRQVYLPPPPPSKLPRLSGTDPT) is disordered. The QLQ domain maps to 74 to 109 (ALTFMQRQELEQQVLIYRYFAAGAPVPVHLVLPIWK). Residues 140–184 (EPEPGRCRRTDGKKWRCSRDVVPGHKYCERHVHRGRGRSRKPMEA) enclose the WRC domain. 2 short sequence motifs (bipartite nuclear localization signal) span residues 145–155 (RCRRTDGKKWR) and 173–180 (RGRGRSRK).

This sequence belongs to the GRF family.

Its subcellular location is the nucleus. In terms of biological role, transcription activator that plays a regulatory role in gibberellin-induced stem elongation. The polypeptide is Growth-regulating factor 12 (GRF12) (Oryza sativa subsp. japonica (Rice)).